A 434-amino-acid chain; its full sequence is NFATC2-interacting protein (434 aa).

Disordered regions lie at residues 1-63 and 176-237; these read MGSP…TPAL and GSED…RAYN. Over residues 28-59 the composition is skewed to pro residues; that stretch reads GPQPCPKPRGPQPCPKPRGPQPCPKPRGPQPC. The segment covering 228–237 has biased composition (basic residues); sequence PVRRKGRAYN. A Ubiquitin-like domain is found at 275–351; that stretch reads PELTVKVRRG…IDCVVLSPPD (77 aa).

It localises to the nucleus. The protein localises to the cytoplasm. Its function is as follows. Regulates the magnitude of NFAT-driven transcription of a specific subset of cytokine genes. This Xenopus tropicalis (Western clawed frog) protein is NFATC2-interacting protein (nfatc2ip).